An 851-amino-acid polypeptide reads, in one-letter code: UPF0508 protein CAGL0M08074g (851 aa).

It belongs to the UPF0508 family.

In Candida glabrata (strain ATCC 2001 / BCRC 20586 / JCM 3761 / NBRC 0622 / NRRL Y-65 / CBS 138) (Yeast), this protein is UPF0508 protein CAGL0M08074g.